Reading from the N-terminus, the 413-residue chain is MFNGKLAQTDPELAKAIELEHQRQQRNIELIASENFVSPAVLEAQGSILTNKYAEGYPGKRYYGGCEFVDIAESLAISRAKKLFGADHANVQPHSGAQANFAVYFALLQPGDKILGMNLAHGGHLTHGSPVNVSGKYFNVVAYGVEEDTGCINYEKLREIALQEKPKMIVAGASAYARAIDFKKIGEIAKEIDAYFFVDMAHIAGLVAAGLHQSPVPYADVVTTTTHKTLRGPRGGMILCKEEYAQLIDKAIFPGSQGGPLMHVIAAKAAAFGEALKPEFKAYQQQIINNAQALAKGLLERGFNLVSGGTDNHLILVDLRGTGITGKQAETLLDEVHITCNKNAIPFDPEKPFVTSGIRLGTPAVTTRGFKEKDMDKVAEIIALTLQEKDNPDTQEKARAMVKELCDKYPLYA.

(6S)-5,6,7,8-tetrahydrofolate contacts are provided by residues L119 and 123 to 125 (GHL). An N6-(pyridoxal phosphate)lysine modification is found at K228. E243 lines the (6S)-5,6,7,8-tetrahydrofolate pocket.

Belongs to the SHMT family. Homodimer. Pyridoxal 5'-phosphate serves as cofactor.

The protein resides in the cytoplasm. The catalysed reaction is (6R)-5,10-methylene-5,6,7,8-tetrahydrofolate + glycine + H2O = (6S)-5,6,7,8-tetrahydrofolate + L-serine. The protein operates within one-carbon metabolism; tetrahydrofolate interconversion. It participates in amino-acid biosynthesis; glycine biosynthesis; glycine from L-serine: step 1/1. In terms of biological role, catalyzes the reversible interconversion of serine and glycine with tetrahydrofolate (THF) serving as the one-carbon carrier. This reaction serves as the major source of one-carbon groups required for the biosynthesis of purines, thymidylate, methionine, and other important biomolecules. Also exhibits THF-independent aldolase activity toward beta-hydroxyamino acids, producing glycine and aldehydes, via a retro-aldol mechanism. This is Serine hydroxymethyltransferase from Desulforamulus reducens (strain ATCC BAA-1160 / DSM 100696 / MI-1) (Desulfotomaculum reducens).